Reading from the N-terminus, the 112-residue chain is Putative pterin-4-alpha-carbinolamine dehydratase (112 aa).

It belongs to the pterin-4-alpha-carbinolamine dehydratase family.

It catalyses the reaction (4aS,6R)-4a-hydroxy-L-erythro-5,6,7,8-tetrahydrobiopterin = (6R)-L-erythro-6,7-dihydrobiopterin + H2O. This chain is Putative pterin-4-alpha-carbinolamine dehydratase, found in Shewanella pealeana (strain ATCC 700345 / ANG-SQ1).